An 80-amino-acid polypeptide reads, in one-letter code: Large ribosomal subunit protein eL38 (80 aa).

This sequence belongs to the eukaryotic ribosomal protein eL38 family. As to quaternary structure, component of the large ribosomal subunit (LSU). Mature N.crassa ribosomes consist of a small (40S) and a large (60S) subunit. The 40S small subunit contains 1 molecule of ribosomal RNA (18S rRNA) and at least 32 different proteins. The large 60S subunit contains 3 rRNA molecules (26S, 5.8S and 5S rRNA) and at least 42 different proteins.

Its subcellular location is the cytoplasm. Its function is as follows. Component of the ribosome, a large ribonucleoprotein complex responsible for the synthesis of proteins in the cell. The small ribosomal subunit (SSU) binds messenger RNAs (mRNAs) and translates the encoded message by selecting cognate aminoacyl-transfer RNA (tRNA) molecules. The large subunit (LSU) contains the ribosomal catalytic site termed the peptidyl transferase center (PTC), which catalyzes the formation of peptide bonds, thereby polymerizing the amino acids delivered by tRNAs into a polypeptide chain. The nascent polypeptides leave the ribosome through a tunnel in the LSU and interact with protein factors that function in enzymatic processing, targeting, and the membrane insertion of nascent chains at the exit of the ribosomal tunnel. The protein is Large ribosomal subunit protein eL38 (rpl-38) of Neurospora crassa (strain ATCC 24698 / 74-OR23-1A / CBS 708.71 / DSM 1257 / FGSC 987).